The sequence spans 406 residues: RILP-like protein 1 (406 aa).

Ser7 carries the phosphoserine modification. One can recognise an RH1 domain in the interval 10–97 (AALSALEKNV…RVERMDRIEK (88 aa)). The residue at position 47 (Cys47) is an S-nitrosocysteine. A coiled-coil region spans residues 76 to 258 (ELDELRLELD…KLRERLQGEH (183 aa)). 2 disordered regions span residues 255-280 (QGEH…ESIS) and 330-354 (EIEE…QPES). Residue Ser259 is modified to Phosphoserine. A compositionally biased stretch (acidic residues) spans 262 to 280 (GEEEEAEIPPQPDGEESIS). The RH2 domain occupies 294 to 359 (RPRFTLQELR…PQPESGIKRL (66 aa)).

It belongs to the RILPL family. In terms of assembly, interacts (when S-nitrosylated) with GAPDH. Interacts with RAB8A; interaction is dependent on the phosphorylation of 'Thr-72' of RAB8A. Interacts with RAB10 and RAB12; the interaction is dependent on the phosphorylation of 'Thr-73' of RAB10, and 'Ser-105' of RAB12. In terms of processing, S-nitrosylation is required for the interaction with GAPDH. Highly expressed in heart, skeletal muscle, brain and lung (at protein level).

It is found in the cytoplasm. Its subcellular location is the cytosol. The protein localises to the cytoskeleton. The protein resides in the microtubule organizing center. It localises to the centrosome. It is found in the centriole. Its subcellular location is the cilium basal body. Its function is as follows. Plays a role in the regulation of cell shape and polarity. Plays a role in cellular protein transport, including protein transport away from primary cilia. Neuroprotective protein, which acts by sequestring GAPDH in the cytosol and prevent the apoptotic function of GAPDH in the nucleus. Competes with SIAH1 for binding GAPDH. Does not regulate lysosomal morphology and distribution. Binds to RAB10 following LRRK2-mediated RAB10 phosphorylation which leads to inhibition of ciliogenesis. The protein is RILP-like protein 1 (Rilpl1) of Rattus norvegicus (Rat).